Here is a 257-residue protein sequence, read N- to C-terminus: AN1-type zinc finger protein 2B (257 aa).

2 consecutive AN1-type zinc fingers follow at residues 4-52 (PDLG…QKDI) and 94-142 (KIFT…HPTS). Zn(2+) contacts are provided by Cys-10, Cys-15, Cys-25, Cys-28, Cys-33, His-36, His-42, Cys-44, Cys-100, Cys-105, Cys-115, Cys-118, Cys-123, His-126, His-132, and Cys-134. A VCP/p97-interacting motif (VIM) region spans residues 141 to 151 (TSRAGLAAISR). The tract at residues 153–187 (QAVASTSTVPSPSQTMPSCTSPSRATTRSPSWTAP) is disordered. Residues 155–171 (VASTSTVPSPSQTMPSC) show a composition bias toward polar residues. A phosphoserine mark is found at Ser-163 and Ser-173. The segment covering 172–186 (TSPSRATTRSPSWTA) has biased composition (low complexity). 2 consecutive UIM domains span residues 197-216 (SEDEALQRALEMSLAETKPQ) and 221-240 (QEEEDLALAQALSASEAEYQ). Cysteine methyl ester is present on Cys-254. A lipid anchor (S-geranylgeranyl cysteine) is attached at Cys-254. The short motif at 254 to 257 (CSLC) is the CAAX motif element. A propeptide spans 255-257 (SLC) (removed in mature form).

As to quaternary structure, binds 'Lys-48'-linked polyubiquitin chains of ubiquitinated proteins. Associates with the proteasome complex; upon exposure to arsenite. Interacts (via VIM motif) with VCP; the interaction is direct. Interacts with BAG6. Interacts with IGF1R (nascent precursor form). Interacts with DERL1, FAF2, NPLOC4 and UFD1; probably through VCP. Post-translationally, phosphorylated by MAPK14. Phosphorylation has no effect on association with the proteasome complex.

It is found in the endoplasmic reticulum membrane. Plays a role in protein homeostasis by regulating both the translocation and the ubiquitin-mediated proteasomal degradation of nascent proteins at the endoplasmic reticulum. It is involved in the regulation of signal-mediated translocation of proteins into the endoplasmic reticulum. It also plays a role in the ubiquitin-mediated proteasomal degradation of proteins for which signal-mediated translocation to the endoplasmic reticulum has failed. May therefore function in the endoplasmic reticulum stress-induced pre-emptive quality control, a mechanism that selectively attenuates the translocation of newly synthesized proteins into the endoplasmic reticulum and reroutes them to the cytosol for proteasomal degradation. By controlling the steady-state expression of the IGF1R receptor, indirectly regulates the insulin-like growth factor receptor signaling pathway. This Homo sapiens (Human) protein is AN1-type zinc finger protein 2B.